A 533-amino-acid chain; its full sequence is Malate synthase A (533 aa).

The active-site Proton acceptor is arginine 166. The active-site Proton donor is the aspartate 447.

This sequence belongs to the malate synthase family.

Its subcellular location is the cytoplasm. The catalysed reaction is glyoxylate + acetyl-CoA + H2O = (S)-malate + CoA + H(+). The protein operates within carbohydrate metabolism; glyoxylate cycle; (S)-malate from isocitrate: step 2/2. The chain is Malate synthase A (aceB) from Escherichia coli (strain K12).